A 296-amino-acid chain; its full sequence is MGSSSSMWTVCVILASLASAALCANPRRPVDVQFGRNYVPTWAFDHIKYFNGGSDIQPHLDKYTGTGFQPKGSYLFGHFSMYIKMVPGDSAGTVTAFYLSSQNAEHDEIDFEFLGNRTGQPYILQTNVFTGGKGDREQRIYLWFDPTKEYHRYSILWNLYQIVFFVDEVPIRVFKNSKDLGVKFPFDQPMKIYNSLWNADDWATRGGLEKTDWSKAPFIAAYKGFHIDGCEASVNAKFCDTQGKRWWDQPEFRDLDAAQWRRLRWVRQKYTIYNYCTDTKRYPHISPPECKRDRDI.

The first 23 residues, 1-23, serve as a signal peptide directing secretion; it reads MGSSSSMWTVCVILASLASAALC. The GH16 domain maps to 24–222; sequence ANPRRPVDVQ…WSKAPFIAAY (199 aa). Residue glutamate 108 is the Nucleophile of the active site. Glutamate 112 serves as the catalytic Proton donor. Xyloglucan is bound at residue glutamate 112. Asparagine 116 carries an N-linked (GlcNAc...) asparagine glycan. Xyloglucan-binding positions include 125–127, 135–137, 201–202, and glycine 206; these read QTN, DRE, and DW. Cystine bridges form between cysteine 230/cysteine 239 and cysteine 276/cysteine 290. Arginine 281 serves as a coordination point for xyloglucan.

The protein belongs to the glycosyl hydrolase 16 family. XTH group 1 subfamily. In terms of processing, contains at least one intrachain disulfide bond essential for its enzymatic activity. N-glycosylated; not essential for its enzymatic activity.

It localises to the secreted. It is found in the cell wall. The protein localises to the extracellular space. Its subcellular location is the apoplast. The enzyme catalyses breaks a beta-(1-&gt;4) bond in the backbone of a xyloglucan and transfers the xyloglucanyl segment on to O-4 of the non-reducing terminal glucose residue of an acceptor, which can be a xyloglucan or an oligosaccharide of xyloglucan.. Its function is as follows. Catalyzes xyloglucan endohydrolysis (XEH) and/or endotransglycosylation (XET). Cleaves and religates xyloglucan polymers, an essential constituent of the primary cell wall, and thereby participates in cell wall construction of growing tissues. The sequence is that of Xyloglucan endotransglucosylase/hydrolase 1 from Glycine max (Soybean).